The primary structure comprises 120 residues: Large ribosomal subunit protein uL18 (120 aa).

Belongs to the universal ribosomal protein uL18 family. Part of the 50S ribosomal subunit; part of the 5S rRNA/L5/L18/L25 subcomplex. Contacts the 5S and 23S rRNAs.

Functionally, this is one of the proteins that bind and probably mediate the attachment of the 5S RNA into the large ribosomal subunit, where it forms part of the central protuberance. The chain is Large ribosomal subunit protein uL18 from Methylobacterium nodulans (strain LMG 21967 / CNCM I-2342 / ORS 2060).